Consider the following 237-residue polypeptide: Orotidine 5'-phosphate decarboxylase (237 aa).

Substrate is bound by residues D11, K34, 61–70 (DLKLHDIPNT), T124, R186, Q195, G215, and R216. The active-site Proton donor is the K63.

This sequence belongs to the OMP decarboxylase family. Type 1 subfamily. Homodimer.

The catalysed reaction is orotidine 5'-phosphate + H(+) = UMP + CO2. It participates in pyrimidine metabolism; UMP biosynthesis via de novo pathway; UMP from orotate: step 2/2. Its function is as follows. Catalyzes the decarboxylation of orotidine 5'-monophosphate (OMP) to uridine 5'-monophosphate (UMP). This Lactococcus lactis subsp. cremoris (strain SK11) protein is Orotidine 5'-phosphate decarboxylase.